Reading from the N-terminus, the 255-residue chain is 5'-nucleotidase SurE (255 aa).

The a divalent metal cation site is built by D8, D9, S39, and N91.

It belongs to the SurE nucleotidase family. Requires a divalent metal cation as cofactor.

The protein localises to the cytoplasm. It carries out the reaction a ribonucleoside 5'-phosphate + H2O = a ribonucleoside + phosphate. Its function is as follows. Nucleotidase that shows phosphatase activity on nucleoside 5'-monophosphates. The polypeptide is 5'-nucleotidase SurE (Acinetobacter baumannii (strain AB0057)).